A 470-amino-acid chain; its full sequence is Nuclear receptor ROR-beta (470 aa).

A DNA-binding region (nuclear receptor) is located at residues 18–93; it reads VIPCKICGDK…LGMSRDAVKF (76 aa). NR C4-type zinc fingers lie at residues 21 to 41 and 57 to 81; these read CKIC…CEGC and CPRQ…LQKC. Over residues 104–117 the composition is skewed to basic and acidic residues; it reads LYAEVQKHQQRLQE. The interval 104-127 is disordered; the sequence is LYAEVQKHQQRLQEQRQQQSGEAE. Positions 222 to 460 constitute an NR LBD domain; the sequence is EIDRIAQNII…TLFPPLYKEL (239 aa). The AF-2 signature appears at 456–461; the sequence is LYKELF.

Belongs to the nuclear hormone receptor family. NR1 subfamily. In terms of assembly, monomer. Interacts with CRX.

It is found in the nucleus. The protein resides in the nucleoplasm. Its function is as follows. Nuclear receptor that binds DNA as a monomer to ROR response elements (RORE) containing a single core motif half-site 5'-AGGTCA-3' preceded by a short A-T-rich sequence. Considered to have intrinsic transcriptional activity, have some natural ligands such as all-trans retinoic acid (ATRA) and other retinoids which act as inverse agonists repressing the transcriptional activity. Required for normal postnatal development of rod and cone photoreceptor cells. Modulates rod photoreceptors differentiation at least by inducing the transcription factor NRL-mediated pathway. In cone photoreceptor cells, regulates transcription of OPN1SW. Involved in the regulation of the period length and stability of the circadian rhythm. May control cytoarchitectural patterning of neocortical neurons during development. May act in a dose-dependent manner to regulate barrel formation upon innervation of layer IV neurons by thalamocortical axons. May play a role in the suppression of osteoblastic differentiation through the inhibition of RUNX2 transcriptional activity. Isoform 1 is critical for hindlimb motor control and for the differentiation of amacrine and horizontal cells in the retina. Regulates the expression of PTF1A synergistically with FOXN4. This chain is Nuclear receptor ROR-beta (RORB), found in Homo sapiens (Human).